The sequence spans 82 residues: Consomatin Ro2 (82 aa).

The first 22 residues, 1–22 (MQTAYWLMVMMMVWITAPLYEG), serve as a signal peptide directing secretion. Residues 23 to 57 (GKPNDVIRGLVPDDLTPQFILRSLISRRRSDKDVR) constitute a propeptide that is removed on maturation. An intrachain disulfide couples Cys-62 to Cys-68. Position 64 is a D-tryptophan (Trp-64). 4-hydroxyproline is present on residues Pro-69 and Pro-70. Positions 72 to 82 (LWRRHDRKGKD) are excised as a propeptide.

Belongs to the conotoxin C superfamily. Consomatin family. Expressed by the venom duct.

It is found in the secreted. In terms of biological role, moderately activates human somatostatin receptors (SSTR) with a preferential activation of SSTR1 and SSTR4. In vivo, does not cause behavioral changes in mice within a few minutes of intracranial injection, but causes a progressive loss of movement thereafter. Four to five hours after injection, mice recover, even with the highest dose tested. Shows antinociception and antihyperalgesia activities in two mouse models of acute pain, most probably by acting outside the central nervous system. The polypeptide is Consomatin Ro2 (Conus rolani (Cone snail)).